The following is a 235-amino-acid chain: uncharacterized protein (235 aa).

Residues 1-98 (MDTKLSVTGA…NKKNTLHYSK (98 aa)) are disordered. Glycyl lysine isopeptide (Lys-Gly) (interchain with G-Cter in ubiquitin) cross-links involve residues lysine 16 and lysine 35. Over residues 38 to 50 (NGNKKRNKNRNRN) the composition is skewed to basic residues. Over residues 51-60 (KKTETKEQNE) the composition is skewed to basic and acidic residues.

This is an uncharacterized protein from Saccharomyces cerevisiae (strain ATCC 204508 / S288c) (Baker's yeast).